A 575-amino-acid chain; its full sequence is FAD-dependent monooxygenase rstn6 (575 aa).

Positions 1–17 (MYDVIVIGAGWCGLVAA) are cleaved as a signal peptide. Position 106 (isoleucine 106) interacts with FAD. 2 N-linked (GlcNAc...) asparagine glycosylation sites follow: asparagine 239 and asparagine 295.

This sequence belongs to the FAD-binding monooxygenase family. Requires FAD as cofactor.

Its pathway is antifungal biosynthesis. In terms of biological role, FAD-dependent monooxygenase; part of the gene cluster that mediates the biosynthesis of the tetrahydropyranyl antifungal agent restricticin that acts as an inhibitor of CYP51 and blocks the ergosterol biosynthesis. The highly reducing polyketide synthase rstn3, the short chain dehydrogenase rstn4, the cyclase rstn5, the FAD-dependent monooxygenase rstn6 and the enoylreductase rstn7 are required to generate the first stable intermediate desmethylrestrictinol. Rstn3 with rstn7 biosynthesize the first polyketide chain intermediate that is reduced by rstn4, followed by epoxidation by rstn6 before 6-endo cyclization via epoxide opening by rstn5 leads to desmethylrestrictinol. The methyltransferase rstn1 then catalyzes the C4 O-methylation of desmethylrestrictinol to produce restrictinol, and the nonribosomal peptide synthetase rstn8 catalyzes the C3 esterification of restrictinol with glycine that leads to restricticin. The chain is FAD-dependent monooxygenase rstn6 from Aspergillus nomiae NRRL (strain ATCC 15546 / NRRL 13137 / CBS 260.88 / M93).